Consider the following 167-residue polypeptide: Bacterial non-heme ferritin-like protein (167 aa).

Positions 1-145 (MATAGMLLKL…TILDEVRSAK (145 aa)) constitute a Ferritin-like diiron domain.

This sequence belongs to the ferritin family. Prokaryotic subfamily.

It is found in the cytoplasm. In Escherichia coli O157:H7, this protein is Bacterial non-heme ferritin-like protein (ftnB).